Here is a 347-residue protein sequence, read N- to C-terminus: Protein RecA (347 aa).

Residue 67–74 participates in ATP binding; it reads GPESSGKT.

Belongs to the RecA family.

It localises to the cytoplasm. Functionally, can catalyze the hydrolysis of ATP in the presence of single-stranded DNA, the ATP-dependent uptake of single-stranded DNA by duplex DNA, and the ATP-dependent hybridization of homologous single-stranded DNAs. It interacts with LexA causing its activation and leading to its autocatalytic cleavage. This is Protein RecA from Helicobacter pylori (strain P12).